A 314-amino-acid polypeptide reads, in one-letter code: Type II methyltransferase M.HpaI (314 aa).

The protein belongs to the N(4)/N(6)-methyltransferase family.

The catalysed reaction is a 2'-deoxyadenosine in DNA + S-adenosyl-L-methionine = an N(6)-methyl-2'-deoxyadenosine in DNA + S-adenosyl-L-homocysteine + H(+). A beta subtype methylase that recognizes the double-stranded sequence 5'-GTTAAC-3', methylates A-5 on both strands, and protects the DNA from cleavage by the HpaI endonuclease. The protein is Type II methyltransferase M.HpaI (hpaIM) of Haemophilus parainfluenzae.